A 477-amino-acid chain; its full sequence is GTPase Der (477 aa).

EngA-type G domains are found at residues 3–167 (LTIA…GKER) and 206–382 (LRIA…RMWN). Residues 9–16 (GRPNVGKS), 56–60 (DTAGL), 119–122 (NKSE), 212–219 (GRPNTGKS), 259–263 (DTAGL), and 324–327 (NKWD) contribute to the GTP site. Residues 383 to 467 (RRISTAKLNR…PIRISLRASD (85 aa)) form the KH-like domain.

Belongs to the TRAFAC class TrmE-Era-EngA-EngB-Septin-like GTPase superfamily. EngA (Der) GTPase family. As to quaternary structure, associates with the 50S ribosomal subunit.

Its function is as follows. GTPase that plays an essential role in the late steps of ribosome biogenesis. This Bartonella quintana (strain Toulouse) (Rochalimaea quintana) protein is GTPase Der.